The sequence spans 456 residues: Ribonuclease inhibitor (456 aa).

N-acetylmethionine is present on methionine 1. LRR repeat units lie at residues 15-43 (WTEL…CKDI), 44-71 (SSAV…VGLV), 72-100 (LQGL…CGIL), 101-128 (PGML…LKLL), 129-157 (CEGL…CEPL), 158-185 (ASVL…VRIL), 186-214 (CQGL…CKDL), 215-242 (CDVV…IAAL), 243-271 (CPGL…CKDL), 272-299 (CRVL…ARLL), 300-328 (CESL…CPYF), 329-356 (CSVL…VQEL), 357-385 (CKAL…CSSL), 386-413 (ANVL…VLQL), and 414-442 (LESL…EEQL). Residue serine 86 is modified to Phosphoserine.

Forms high-affinity heterodimers with RNASE1, ANG and RNASE2.

It is found in the cytoplasm. The protein localises to the nucleus. In terms of biological role, ribonuclease inhibitor which inhibits RNASE1, RNASE2 and angiogenin (ANG). May play a role in redox homeostasis. Required to inhibit the cytotoxic tRNA ribonuclease activity of ANG in the cytoplasm in absence of stress. Relocates to the nucleus in response to stress, relieving inhibition of ANG in the cytoplasm, and inhibiting the angiogenic activity of ANG in the nucleus. The polypeptide is Ribonuclease inhibitor (Rnh1) (Mus musculus (Mouse)).